The chain runs to 777 residues: MEEKYSSNVMSSGRLGPVDAPESRLTRYIVLLCFTKFLKALGIFESYDLLKVVHIVQFIFILKLGSTCFMVLFQKPFSSGKSITKRQWVSIVKHAFVSCIISLLWFFGLTLCGPLRTLLLFEHSDIVVISLLTVLFTGSGGGPSKTRGAAFFIIAVICLLLFDNDDLMAKIAEHPEGHHDSALTHFLYRAFFLLGVADHKGGVLLLVLALCFNVGFHTASRKLSLDIGGAKRLQALSHLVSVIILSPWVIILSATTESKIESWSALIMPFMTVIFSVMIMDFYVESVCSVKMEPSKCARYGSFLIFASALLLGNFWTHPITDQLRAMNKPAHQLHTEHVLSGGVVVSAIFFILSAQILASSSRKGQRGTLVGYSPEGTPLYNFMGDALHNTSPSMPRFLKDSLKQILEEYDSRQIFYFLCLNLAFTFVEIFYGVWTNSLGLLSDGFHMLFDCSALVMGLIAALMTRWKATRIFSYGYGRVEILSGFINGLFLVVIAFFVFIEAVARIYDPPDINTDMLTPVSVGGLIVNLVGICAFSHAHSHGAARGGCPSHDHGHSHHGHGHSHGHNHGHSHSDHGHNHGHTHNHGHSHGSAGVGMNANMRGVFSHVLADTLGSVGVIVSTILIRQFGWLIADPLCSLFIAVLIFGSVLPLLKDACQVILLRIPQETEKGINIALEKISNLDGLISYRDPHFWRHSASLVAGTIHVQVMSDVVEQRIIQQVTSLLKDAGVNNLTVQVEKEAYFQHMSGLSTGFQDVLIMTKQMDTIKYYKDGTYIM.

Residues 1 to 28 are Cytoplasmic-facing; the sequence is MEEKYSSNVMSSGRLGPVDAPESRLTRY. A helical membrane pass occupies residues 29–49; the sequence is IVLLCFTKFLKALGIFESYDL. Over 50–52 the chain is Lumenal; sequence LKV. Residues 53–73 traverse the membrane as a helical segment; the sequence is VHIVQFIFILKLGSTCFMVLF. The Cytoplasmic portion of the chain corresponds to 74 to 94; sequence QKPFSSGKSITKRQWVSIVKH. Residues 95-115 form a helical membrane-spanning segment; the sequence is AFVSCIISLLWFFGLTLCGPL. At 116-117 the chain is on the lumenal side; the sequence is RT. Residues 118–138 traverse the membrane as a helical segment; the sequence is LLLFEHSDIVVISLLTVLFTG. The Cytoplasmic portion of the chain corresponds to 139–148; the sequence is SGGGPSKTRG. The chain crosses the membrane as a helical span at residues 149–169; the sequence is AAFFIIAVICLLLFDNDDLMA. The Lumenal portion of the chain corresponds to 170-189; sequence KIAEHPEGHHDSALTHFLYR. Residues 190–210 traverse the membrane as a helical segment; it reads AFFLLGVADHKGGVLLLVLAL. Residues 211–234 lie on the Cytoplasmic side of the membrane; that stretch reads CFNVGFHTASRKLSLDIGGAKRLQ. The chain crosses the membrane as a helical span at residues 235 to 255; that stretch reads ALSHLVSVIILSPWVIILSAT. Topologically, residues 256–263 are lumenal; sequence TESKIESW. A helical transmembrane segment spans residues 264 to 284; the sequence is SALIMPFMTVIFSVMIMDFYV. At 285 to 299 the chain is on the cytoplasmic side; it reads ESVCSVKMEPSKCAR. The helical transmembrane segment at 300-320 threads the bilayer; the sequence is YGSFLIFASALLLGNFWTHPI. The Lumenal segment spans residues 321–338; that stretch reads TDQLRAMNKPAHQLHTEH. A helical membrane pass occupies residues 339 to 359; it reads VLSGGVVVSAIFFILSAQILA. Residues 360 to 414 lie on the Cytoplasmic side of the membrane; the sequence is SSSRKGQRGTLVGYSPEGTPLYNFMGDALHNTSPSMPRFLKDSLKQILEEYDSRQ. The chain crosses the membrane as a helical span at residues 415-435; the sequence is IFYFLCLNLAFTFVEIFYGVW. Residues 436 to 444 are Lumenal-facing; the sequence is TNSLGLLSD. Residues 445–465 form a helical membrane-spanning segment; the sequence is GFHMLFDCSALVMGLIAALMT. The Zn(2+) site is built by histidine 447 and aspartate 451. Topologically, residues 466–484 are cytoplasmic; the sequence is RWKATRIFSYGYGRVEILS. Residues 485–505 form a helical membrane-spanning segment; it reads GFINGLFLVVIAFFVFIEAVA. The Lumenal segment spans residues 506 to 516; it reads RIYDPPDINTD. The helical transmembrane segment at 517-537 threads the bilayer; that stretch reads MLTPVSVGGLIVNLVGICAFS. The his-rich loop; required for zinc transport stretch occupies residues 538 to 586; that stretch reads HAHSHGAARGGCPSHDHGHSHHGHGHSHGHNHGHSHSDHGHNHGHTHNH. Residues 538 to 604 are Cytoplasmic-facing; the sequence is HAHSHGAARG…VGMNANMRGV (67 aa). The segment at 547 to 593 is disordered; that stretch reads GGCPSHDHGHSHHGHGHSHGHNHGHSHSDHGHNHGHTHNHGHSHGSA. Composition is skewed to basic residues over residues 555-571 and 579-589; these read GHSHHGHGHSHGHNHGH and NHGHTHNHGHS. A helical membrane pass occupies residues 605-625; sequence FSHVLADTLGSVGVIVSTILI. 2 residues coordinate Zn(2+): histidine 607 and aspartate 611. At 626–629 the chain is on the lumenal side; sequence RQFG. The chain crosses the membrane as a helical span at residues 630 to 650; the sequence is WLIADPLCSLFIAVLIFGSVL. The Cytoplasmic portion of the chain corresponds to 651 to 777; that stretch reads PLLKDACQVI…KYYKDGTYIM (127 aa).

The protein belongs to the cation diffusion facilitator (CDF) transporter (TC 2.A.4) family. SLC30A subfamily. Heterodimer with SLC30A6/ZNT6; form a functional zinc ion transmembrane transporter.

Its subcellular location is the golgi apparatus. The protein localises to the golgi stack membrane. It localises to the cytoplasmic vesicle. The protein resides in the COPII-coated vesicle membrane. It is found in the secretory vesicle membrane. Its subcellular location is the trans-Golgi network membrane. It catalyses the reaction Zn(2+)(in) + 2 H(+)(out) = Zn(2+)(out) + 2 H(+)(in). Functionally, together with SLC30A6 forms a functional proton-coupled zinc ion antiporter mediating zinc entry into the lumen of organelles along the secretory pathway. By contributing to zinc ion homeostasis within the early secretory pathway, regulates the activation and folding of enzymes like alkaline phosphatases and enzymes involved in phosphatidylinositol glycan anchor biosynthesis. The sequence is that of Proton-coupled zinc antiporter SLC30A5 (slc30a5) from Xenopus tropicalis (Western clawed frog).